Here is a 900-residue protein sequence, read N- to C-terminus: Alanine--tRNA ligase (900 aa).

Residues H604, H608, C708, and H712 each contribute to the Zn(2+) site.

The protein belongs to the class-II aminoacyl-tRNA synthetase family. Zn(2+) serves as cofactor.

The protein localises to the cytoplasm. It carries out the reaction tRNA(Ala) + L-alanine + ATP = L-alanyl-tRNA(Ala) + AMP + diphosphate. Its function is as follows. Catalyzes the attachment of alanine to tRNA(Ala) in a two-step reaction: alanine is first activated by ATP to form Ala-AMP and then transferred to the acceptor end of tRNA(Ala). Also edits incorrectly charged Ser-tRNA(Ala) and Gly-tRNA(Ala) via its editing domain. The sequence is that of Alanine--tRNA ligase from Saccharolobus islandicus (strain L.S.2.15 / Lassen #1) (Sulfolobus islandicus).